The following is a 650-amino-acid chain: MICOS complex subunit MIC60, mitochondrial (650 aa).

Residues 1–34 (MLRKSVLELSSRLSIKRFPRNLGAQRFHLSSSRN) constitute a mitochondrion transit peptide. Residues 26–74 (RFHLSSSRNASTSGKNGLPGAKPVGKPDASKVDPPKVTPPPPTKGNSSK) form a disordered region. Over residues 28 to 40 (HLSSSRNASTSGK) the composition is skewed to polar residues. The Mitochondrial matrix portion of the chain corresponds to 35-74 (ASTSGKNGLPGAKPVGKPDASKVDPPKVTPPPPTKGNSSK). The chain crosses the membrane as a helical span at residues 75-95 (VVIGGVAIAGAFLVAYQTGYL). Residues 96–549 (DQYLGKEQQK…FDTLKGTLRH (454 aa)) lie on the Mitochondrial intermembrane side of the membrane. Disordered stretches follow at residues 121 to 168 (EAHH…ESDL), 239 to 267 (QSSSVHRESETESASPKDPAALKTPEDGI), and 284 to 304 (EGSDTESTGSSSIGEQITKET). The segment covering 284-299 (EGSDTESTGSSSIGEQ) has biased composition (low complexity). Coiled coils occupy residues 345 to 369 (AQVFAEELRALKEKYENELRDLRAR) and 396 to 430 (KAIQERMEDKLKAELEQKETEAQLALSKAEELAKA). The chain crosses the membrane as a helical span at residues 550-570 (FSLIPPGGGGILAHSLAHVAS). Over 571–650 (SLKFKEVDQA…QSYATCVSLT (80 aa)) the chain is Mitochondrial matrix.

The protein belongs to the MICOS complex subunit Mic60 family. In terms of assembly, component of the mitochondrial contact site and cristae organizing system (MICOS) complex. The MICOS complex associates with mitochondrial outer membrane proteins. Present in a large lipid-enriched complex called mitochondrial transmembrane lipoprotein (MTL) complex made of proteins located in the two mitochondrial membranes, including the TOM complex and the core components of the MICOS complex and containing at least digalactosyldiacylglycerol (DGDG). Binds to TOM40-1. Component of a mitochondrial large protein complex that contains, at least, MIC60, DGS1, TOM40, TOM20 proteins, and petC/RISP.

Its subcellular location is the mitochondrion inner membrane. Component of the MICOS complex, a large protein complex of the mitochondrial inner membrane that plays crucial roles in the maintenance of crista junctions, inner membrane architecture, and formation of contact sites to the outer membrane. Plays a role in keeping cristae membranes connected to the inner boundary membrane. Also promotes protein import via the mitochondrial intermembrane space assembly (MIA) pathway. Involved in the maintenance of mitochondria morphology. Binds to glycerolipids such as cardiolipin (CL). Contributes to the export of phosphatidylethanolamine (PE) from mitochondria and to the import of galactoglycerolipids from plastids during phosphate (Pi) starvation. Promotes lipid desorption from membranes, likely as an initial step for lipid transfer, and regulates probably the tethering between the inner and outer membranes of mitochondria by binding to TOM40 proteins. The protein is MICOS complex subunit MIC60, mitochondrial of Arabidopsis thaliana (Mouse-ear cress).